The sequence spans 301 residues: Protein FdhE homolog (301 aa).

It belongs to the FdhE family.

Its subcellular location is the cytoplasm. In terms of biological role, necessary for formate dehydrogenase activity. The polypeptide is Protein FdhE homolog (Shewanella baltica (strain OS195)).